Consider the following 230-residue polypeptide: Cell division ATP-binding protein FtsE (230 aa).

Positions 3-228 (ITLDHVTKQY…RDEQRGVYGM (226 aa)) constitute an ABC transporter domain. An ATP-binding site is contributed by 37 to 44 (GPSGSGKS).

This sequence belongs to the ABC transporter superfamily. In terms of assembly, homodimer. Forms a membrane-associated complex with FtsX.

Its subcellular location is the cell membrane. Its function is as follows. Part of the ABC transporter FtsEX involved in cellular division. Has ATPase activity. The chain is Cell division ATP-binding protein FtsE from Mycobacterium tuberculosis (strain ATCC 25618 / H37Rv).